Here is a 234-residue protein sequence, read N- to C-terminus: PHD finger protein ING1 (234 aa).

Residues 129 to 166 (NNGKAGNAGEGGRGGRKKTRLATAASTAAASTGMTSSN) form a disordered region. Residues 149 to 165 (LATAASTAAASTGMTSS) show a composition bias toward low complexity. The PHD-type zinc-finger motif lies at 178-227 (PTYCICNQVSFGEMVACDNNACKIEWFHFGCVGLKEQPKGKWYCPECATV). Zn(2+) contacts are provided by cysteine 181, cysteine 183, cysteine 194, cysteine 199, histidine 205, cysteine 208, cysteine 221, and cysteine 224.

It belongs to the ING family. Interacts with H3K4me3 and to a lesser extent with H3K4me2. As to expression, ubiquitously expressed.

The protein localises to the nucleus. In terms of biological role, histone-binding component that specifically recognizes H3 tails trimethylated on 'Lys-4' (H3K4me3), which mark transcription start sites of virtually all active genes. This chain is PHD finger protein ING1 (ING1), found in Arabidopsis thaliana (Mouse-ear cress).